The sequence spans 286 residues: MQNKIDHKNIKKIGLVTRPNVSLDKEILKLQSILSIYKVELVLFKESSEILDLPKYGLDDLFKISDFVISLGGDGTLISLCRKACEYDKAVLGIHAGHLGFLTDFKVDEAENFFQAFFQGEFRIEKPYLLSVFLEDKQGKILEKLAFNDVVISKNNQAPMAHIEVFRKEKKFNEYFGDGLIVATPAGSTAYNLSANGPIVYTLAQAFILTPVCSHSLTQRSIVLPKGFEIEIMAKDCILCIDGQENYKMNDFKSIKVGLSDKNVALIHPKNRDYFQILKEKLHWGN.

The active-site Proton acceptor is D74. Residues 74 to 75, 148 to 149, D178, A186, 189 to 194, and Q244 contribute to the NAD(+) site; these read DG, ND, and TAYNLS.

This sequence belongs to the NAD kinase family. It depends on a divalent metal cation as a cofactor.

The protein localises to the cytoplasm. It catalyses the reaction NAD(+) + ATP = ADP + NADP(+) + H(+). Its function is as follows. Involved in the regulation of the intracellular balance of NAD and NADP, and is a key enzyme in the biosynthesis of NADP. Catalyzes specifically the phosphorylation on 2'-hydroxyl of the adenosine moiety of NAD to yield NADP. This Campylobacter jejuni subsp. doylei (strain ATCC BAA-1458 / RM4099 / 269.97) protein is NAD kinase.